The sequence spans 144 residues: Large ribosomal subunit protein uL15 (144 aa).

Residues Met-1–Lys-58 form a disordered region. Over residues Arg-21 to Ala-31 the composition is skewed to gly residues.

The protein belongs to the universal ribosomal protein uL15 family. Part of the 50S ribosomal subunit.

In terms of biological role, binds to the 23S rRNA. The protein is Large ribosomal subunit protein uL15 of Psychromonas ingrahamii (strain DSM 17664 / CCUG 51855 / 37).